Reading from the N-terminus, the 253-residue chain is uncharacterized protein (253 aa).

The protein belongs to the NAD(P)-dependent epimerase/dehydratase family.

This is an uncharacterized protein from Bacillus subtilis (strain 168).